Here is a 114-residue protein sequence, read N- to C-terminus: Aspartate 1-decarboxylase (114 aa).

The Schiff-base intermediate with substrate; via pyruvic acid role is filled by Ser-25. The residue at position 25 (Ser-25) is a Pyruvic acid (Ser). Thr-57 lines the substrate pocket. Tyr-58 serves as the catalytic Proton donor. Gly-71–Ala-73 contributes to the substrate binding site.

It belongs to the PanD family. Heterooctamer of four alpha and four beta subunits. The cofactor is pyruvate. Post-translationally, is synthesized initially as an inactive proenzyme, which is activated by self-cleavage at a specific serine bond to produce a beta-subunit with a hydroxyl group at its C-terminus and an alpha-subunit with a pyruvoyl group at its N-terminus.

It localises to the cytoplasm. The catalysed reaction is L-aspartate + H(+) = beta-alanine + CO2. It functions in the pathway cofactor biosynthesis; (R)-pantothenate biosynthesis; beta-alanine from L-aspartate: step 1/1. Catalyzes the pyruvoyl-dependent decarboxylation of aspartate to produce beta-alanine. The sequence is that of Aspartate 1-decarboxylase from Campylobacter hominis (strain ATCC BAA-381 / DSM 21671 / CCUG 45161 / LMG 19568 / NCTC 13146 / CH001A).